Here is a 118-residue protein sequence, read N- to C-terminus: Cysteine--tRNA ligase (118 aa).

Cys-28 provides a ligand contact to Zn(2+). The short motif at 30 to 40 (PTVYNYIHIGN) is the 'HIGH' region element.

It belongs to the class-I aminoacyl-tRNA synthetase family. In terms of assembly, monomer. The cofactor is Zn(2+).

The protein localises to the cytoplasm. It carries out the reaction tRNA(Cys) + L-cysteine + ATP = L-cysteinyl-tRNA(Cys) + AMP + diphosphate. This chain is Cysteine--tRNA ligase (cysS), found in Staphylococcus xylosus.